The sequence spans 1005 residues: Ephrin type-A receptor 8 (1005 aa).

Residues 1 to 27 (MAPARGRLPPALWVVTAAAAAATCVSA) form the signal peptide. At 28–542 (ARGEVNLLDT…KPRPRYDTRT (515 aa)) the chain is on the extracellular side. Positions 31-209 (EVNLLDTSTI…YYKKCPAMVR (179 aa)) constitute an Eph LBD domain. Fibronectin type-III domains are found at residues 328–438 (PPSA…TNQA) and 439–534 (APSQ…TGKP). Residues Asn340, Asn407, and Asn432 are each glycosylated (N-linked (GlcNAc...) asparagine). A helical membrane pass occupies residues 543–563 (IVWICLTLITGLVVLLLLLIC). A mediates interaction with ANKS1A and ANKS1B region spans residues 564-570 (KKRHCGY). Over 564-1005 (KKRHCGYSKA…TSTQGPRRHL (442 aa)) the chain is Cytoplasmic. Positions 589–644 (APPPVFLPLHHPPGKLPEPQFYAEPHTYEEPGRAGRSFTREIEASRIHIEKIIGSG) are mediates interaction with PIK3CG and required for endocytosis. Phosphotyrosine; by autocatalysis is present on Tyr616. The Protein kinase domain maps to 635–896 (IHIEKIIGSG…QIVSVLDALI (262 aa)). ATP contacts are provided by residues 641-649 (IGSGDSGEV) and Lys667. Asp760 (proton acceptor) is an active-site residue. Tyr839 is modified (phosphotyrosine; by autocatalysis). The 65-residue stretch at 930-994 (GGGLTVGDWL…LGSIQTMRAQ (65 aa)) folds into the SAM domain. Positions 1003–1005 (RHL) match the PDZ-binding motif.

This sequence belongs to the protein kinase superfamily. Tyr protein kinase family. Ephrin receptor subfamily. Heterotetramer upon binding of the ligand. The heterotetramer is composed of an ephrin dimer and a receptor dimer. Oligomerization is probably required to induce biological responses. May also form heterodimers with other ephrin receptors. Interacts with FYN; possible downstream effector of EPHA8 in regulation of cell adhesion. Interacts with PIK3CG; regulates integrin-mediated cell adhesion to substrate. Interacts with TIAM1; regulates clathrin-mediated endocytosis of EPHA8. Interacts with ANKS1A and ANKS1B; EPHA8 kinase activity-independent but stimulated by EPHA8 ubiquitination. Post-translationally, phosphorylated. Phosphorylation is stimulated upon binding of its ligands including EFNA2, EFNA3 and EFNA5. Autophosphorylation on Tyr-616 is critical for association with FYN. Autophosphorylation on Tyr-839 modulates tyrosine kinase activity. In terms of processing, ubiquitinated. Ubiquitination by CBL regulates the receptor stability and activity through proteasomal degradation. ANKS1A prevents ubiquitination and degradation.

Its subcellular location is the cell membrane. It is found in the cell projection. The protein resides in the early endosome membrane. The enzyme catalyses L-tyrosyl-[protein] + ATP = O-phospho-L-tyrosyl-[protein] + ADP + H(+). In terms of biological role, receptor tyrosine kinase which binds promiscuously GPI-anchored ephrin-A family ligands residing on adjacent cells, leading to contact-dependent bidirectional signaling into neighboring cells. The signaling pathway downstream of the receptor is referred to as forward signaling while the signaling pathway downstream of the ephrin ligand is referred to as reverse signaling. The GPI-anchored ephrin-A EFNA2, EFNA3, and EFNA5 are able to activate EPHA8 through phosphorylation. With EFNA5 may regulate integrin-mediated cell adhesion and migration on fibronectin substrate but also neurite outgrowth. During development of the nervous system also plays a role in axon guidance. Downstream effectors of the EPHA8 signaling pathway include FYN which promotes cell adhesion upon activation by EPHA8 and the MAP kinases in the stimulation of neurite outgrowth. This chain is Ephrin type-A receptor 8 (EPHA8), found in Homo sapiens (Human).